A 338-amino-acid polypeptide reads, in one-letter code: Queuosine 5'-phosphate N-glycosylase/hydrolase (338 aa).

At Met1 the chain carries N-acetylmethionine. His51, Phe235, Asp237, Asp311, Tyr312, and Asp316 together coordinate queuine. Residue Asp237 is the Nucleophile or transition state stabilizer of the active site.

The protein belongs to the QNG1 protein family. As to expression, highly expressed in liver.

It carries out the reaction queuosine 5'-phosphate + H2O = queuine + D-ribose 5-phosphate. Its function is as follows. Catalyzes the hydrolysis of queuosine 5'-phosphate, releasing the nucleobase queuine (q). Is required for salvage of queuine from exogenous queuosine (Q) that is imported and then converted to queuosine 5'-phosphate intracellularly. In Mus musculus (Mouse), this protein is Queuosine 5'-phosphate N-glycosylase/hydrolase.